A 218-amino-acid chain; its full sequence is Large ribosomal subunit protein uL3 (218 aa).

It belongs to the universal ribosomal protein uL3 family. Part of the 50S ribosomal subunit. Forms a cluster with proteins L14 and L19.

Functionally, one of the primary rRNA binding proteins, it binds directly near the 3'-end of the 23S rRNA, where it nucleates assembly of the 50S subunit. This chain is Large ribosomal subunit protein uL3, found in Corynebacterium aurimucosum (strain ATCC 700975 / DSM 44827 / CIP 107346 / CN-1) (Corynebacterium nigricans).